A 236-amino-acid chain; its full sequence is tRNA (guanine-N(7)-)-methyltransferase (236 aa).

The S-adenosyl-L-methionine site is built by Asp-35, Glu-60, Asn-87, and Asp-113. The active site involves Asp-113. Positions 117 and 149 each coordinate substrate.

Belongs to the class I-like SAM-binding methyltransferase superfamily. TrmB family.

The enzyme catalyses guanosine(46) in tRNA + S-adenosyl-L-methionine = N(7)-methylguanosine(46) in tRNA + S-adenosyl-L-homocysteine. The protein operates within tRNA modification; N(7)-methylguanine-tRNA biosynthesis. Its function is as follows. Catalyzes the formation of N(7)-methylguanine at position 46 (m7G46) in tRNA. The sequence is that of tRNA (guanine-N(7)-)-methyltransferase from Parasynechococcus marenigrum (strain WH8102).